The following is a 545-amino-acid chain: Chaperonin GroEL 2 (545 aa).

ATP-binding positions include 30 to 33, Lys51, 87 to 91, Gly415, and Asp496; these read TLGP and DGTTT.

Belongs to the chaperonin (HSP60) family. Forms a cylinder of 14 subunits composed of two heptameric rings stacked back-to-back. Interacts with the co-chaperonin GroES.

Its subcellular location is the cytoplasm. The enzyme catalyses ATP + H2O + a folded polypeptide = ADP + phosphate + an unfolded polypeptide.. Functionally, together with its co-chaperonin GroES, plays an essential role in assisting protein folding. The GroEL-GroES system forms a nano-cage that allows encapsulation of the non-native substrate proteins and provides a physical environment optimized to promote and accelerate protein folding. The sequence is that of Chaperonin GroEL 2 from Nitrobacter winogradskyi (strain ATCC 25391 / DSM 10237 / CIP 104748 / NCIMB 11846 / Nb-255).